A 153-amino-acid chain; its full sequence is Cell division protein SepF (153 aa).

The protein belongs to the SepF family. Homodimer. Interacts with FtsZ.

Its subcellular location is the cytoplasm. Functionally, cell division protein that is part of the divisome complex and is recruited early to the Z-ring. Probably stimulates Z-ring formation, perhaps through the cross-linking of FtsZ protofilaments. Its function overlaps with FtsA. In Clostridium novyi (strain NT), this protein is Cell division protein SepF.